We begin with the raw amino-acid sequence, 320 residues long: Cytochrome f (320 aa).

The N-terminal stretch at 1–35 (MQNRNTFSWVKEPINRSISVLIIIYVITQTSISNA) is a signal peptide. Heme is bound by residues Y36, C56, C59, and H60. A helical transmembrane segment spans residues 286–306 (VQGLLFFLASVTLAQIFLVLK).

This sequence belongs to the cytochrome f family. As to quaternary structure, the 4 large subunits of the cytochrome b6-f complex are cytochrome b6, subunit IV (17 kDa polypeptide, petD), cytochrome f and the Rieske protein, while the 4 small subunits are PetG, PetL, PetM and PetN. The complex functions as a dimer. Heme is required as a cofactor.

It localises to the plastid. It is found in the chloroplast thylakoid membrane. Component of the cytochrome b6-f complex, which mediates electron transfer between photosystem II (PSII) and photosystem I (PSI), cyclic electron flow around PSI, and state transitions. This chain is Cytochrome f, found in Piper cenocladum (Ant piper).